Here is a 477-residue protein sequence, read N- to C-terminus: ETS translocation variant 1 (477 aa).

Ser94 carries the post-translational modification Phosphoserine. Residues 128–178 (PQVGMRPSNPPTPSSTPVSPLHHASPNSAHTSKPDRAFPAHLPPSQPIQDS) are disordered. Ser191 and Ser216 each carry phosphoserine; by RPS6KA1 and RPS6KA5. Lys317 participates in a covalent cross-link: Glycyl lysine isopeptide (Lys-Gly) (interchain with G-Cter in SUMO2). The segment at residues 335-415 (LQLWQFLVAL…AGERYVYKFV (81 aa)) is a DNA-binding region (ETS).

Belongs to the ETS family. Post-translationally, sumoylated. Phosphorylated at Ser-191 and Ser-216 by RPS6KA1 and RPS6KA5; phosphorylation activates transcriptional activity.

It localises to the nucleus. Functionally, transcriptional activator that binds to DNA sequences containing the consensus pentanucleotide 5'-CGGA[AT]-3'. Required for olfactory dopaminergic neuron differentiation; may directly activate expression of tyrosine hydroxylase (TH). The protein is ETS translocation variant 1 (ETV1) of Bos taurus (Bovine).